A 785-amino-acid chain; its full sequence is Probable cationic amino acid transporter (785 aa).

The next 15 helical transmembrane spans lie at 58–78 (LVSL…SGLV), 83–103 (AGPG…LSGV), 119–141 (AYTY…NLIL), 187–207 (YPDI…ALGV), 216–236 (VLNV…LFFV), 251–271 (WSGV…FDII), 291–311 (ASLV…TLMV), 337–357 (IVAI…LFPM), 360–380 (VIYA…VSTY), 384–404 (PAVA…LVSL), 407–427 (LIEM…VCVL), 568–588 (CVVL…FGSG), 596–616 (WAVL…FIII), 628–648 (MAPC…YLML), and 655–675 (WIRF…YGMW). The interval 715–785 (DQGPFQNWGK…VDDDLDDPLE (71 aa)) is disordered. Residues 727 to 740 (QQKQPQQEQSEPQS) are compositionally biased toward low complexity. The span at 775–785 (VVDDDLDDPLE) shows a compositional bias: acidic residues.

Belongs to the amino acid-polyamine-organocation (APC) superfamily.

It is found in the lysosome membrane. May be involved in arginine transport. This chain is Probable cationic amino acid transporter (slc7a14a), found in Danio rerio (Zebrafish).